Reading from the N-terminus, the 353-residue chain is tRNA-splicing endonuclease (353 aa).

Active-site residues include Y289, H300, and K331.

Belongs to the tRNA-intron endonuclease family. Archaeal long subfamily. In terms of assembly, homodimer.

The catalysed reaction is pretRNA = a 3'-half-tRNA molecule with a 5'-OH end + a 5'-half-tRNA molecule with a 2',3'-cyclic phosphate end + an intron with a 2',3'-cyclic phosphate and a 5'-hydroxyl terminus.. Endonuclease that removes tRNA introns. Cleaves pre-tRNA at the 5'- and 3'-splice sites to release the intron. The products are an intron and two tRNA half-molecules bearing 2',3' cyclic phosphate and 5'-OH termini. Recognizes a pseudosymmetric substrate in which 2 bulged loops of 3 bases are separated by a stem of 4 bp. This chain is tRNA-splicing endonuclease, found in Methanosarcina mazei (strain ATCC BAA-159 / DSM 3647 / Goe1 / Go1 / JCM 11833 / OCM 88) (Methanosarcina frisia).